We begin with the raw amino-acid sequence, 148 residues long: MKVIFLKDVKGKGKKGEVKNVPDGYANNFLLKQGLAAEATNSSMKTLEAQKRKEEKDAAAELESAKQLKETLEKLTVELKAKSGEGGRLFGSITSKQIVDAMQKSHKIKLDKRKFEMDDAIRALGYTNVTVKLHPQVTATVKVHVSEQ.

The protein belongs to the bacterial ribosomal protein bL9 family.

Functionally, binds to the 23S rRNA. The polypeptide is Large ribosomal subunit protein bL9 (Bacillus thuringiensis subsp. konkukian (strain 97-27)).